Consider the following 173-residue polypeptide: Translation initiation factor IF-3 (173 aa).

It belongs to the IF-3 family. Monomer.

The protein localises to the cytoplasm. In terms of biological role, IF-3 binds to the 30S ribosomal subunit and shifts the equilibrium between 70S ribosomes and their 50S and 30S subunits in favor of the free subunits, thus enhancing the availability of 30S subunits on which protein synthesis initiation begins. In Ehrlichia chaffeensis (strain ATCC CRL-10679 / Arkansas), this protein is Translation initiation factor IF-3.